The sequence spans 545 residues: Calcium-dependent protein kinase 6 (545 aa).

G2 is lipidated: N-myristoyl glycine. The span at 34–43 shows a compositional bias: low complexity; it reads CSSTSTATSS. The segment at 34–58 is disordered; it reads CSSTSTATSSGGRMPIRSHQQRLSS. One can recognise a Protein kinase domain in the interval 74-332; the sequence is YTVGRKLGQG…AHQVLCHPWV (259 aa). Residues 80–88 and K103 contribute to the ATP site; that span reads LGQGQFGTT. D198 serves as the catalytic Proton acceptor. The tract at residues 338–368 is autoinhibitory domain; sequence APDRPLAPAVLSRLKQFSAMNRLKKMALRVI. EF-hand domains are found at residues 375–410, 411–446, 447–482, and 486–516; these read EELAGLKEMFKAMDTDASGAITFDELKEGLRRYGSN, LREAEIRDLMDAADVDKSGTIDYDEFIAATVHLNKL, EREEHLLAAFAYFDRDGSGYITVDELEHACRDHNMA, and IDDIIREVDQDNDGRIDYGEFVAMMKKGAID. Ca(2+)-binding residues include D388, D390, S392, E399, D424, D426, S428, T430, E435, D460, D462, S464, Y466, E471, D494, D496, D498, R500, and E505. Residues 526-545 form a disordered region; sequence GRPTTATSDDPSPTISSSSR. A compositionally biased stretch (low complexity) spans 528–545; the sequence is PTTATSDDPSPTISSSSR.

This sequence belongs to the protein kinase superfamily. Ser/Thr protein kinase family. CDPK subfamily.

It is found in the membrane. It carries out the reaction L-seryl-[protein] + ATP = O-phospho-L-seryl-[protein] + ADP + H(+). It catalyses the reaction L-threonyl-[protein] + ATP = O-phospho-L-threonyl-[protein] + ADP + H(+). Activated by calcium. Autophosphorylation may play an important role in the regulation of the kinase activity. Its function is as follows. May play a role in signal transduction pathways that involve calcium as a second messenger. This chain is Calcium-dependent protein kinase 6, found in Oryza sativa subsp. japonica (Rice).